We begin with the raw amino-acid sequence, 380 residues long: ATPase ASNA1 homolog (380 aa).

48-55 (KGGVGKTT) contacts ATP. The active site involves Asp-77. The ATP site is built by Glu-248 and Asn-275.

Belongs to the arsA ATPase family. In terms of assembly, homodimer.

Its subcellular location is the cytoplasm. The protein resides in the endoplasmic reticulum. ATPase required for the post-translational delivery of tail-anchored (TA) proteins to the endoplasmic reticulum. Recognizes and selectively binds the transmembrane domain of TA proteins in the cytosol. This complex then targets to the endoplasmic reticulum by membrane-bound receptors, where the tail-anchored protein is released for insertion. This process is regulated by ATP binding and hydrolysis. ATP binding drives the homodimer towards the closed dimer state, facilitating recognition of newly synthesized TA membrane proteins. ATP hydrolysis is required for insertion. Subsequently, the homodimer reverts towards the open dimer state, lowering its affinity for the membrane-bound receptor, and returning it to the cytosol to initiate a new round of targeting. This Plasmodium yoelii yoelii protein is ATPase ASNA1 homolog.